The chain runs to 70 residues: MTTIRVKENEPFDVALRRFKRTIEKLGLLTDLRAREFYEKPTAERKRKKAAAVKRNYKRIRAMQLPKKMY.

The protein belongs to the bacterial ribosomal protein bS21 family.

This Albidiferax ferrireducens (strain ATCC BAA-621 / DSM 15236 / T118) (Rhodoferax ferrireducens) protein is Small ribosomal subunit protein bS21.